We begin with the raw amino-acid sequence, 241 residues long: Caffeoyl-CoA O-methyltransferase (241 aa).

The residue at position 1 (methionine 1) is a Blocked amino end (Met). Lysine 15 provides a ligand contact to substrate. S-adenosyl-L-methionine-binding positions include threonine 57, glutamate 79, 81 to 82 (GV), serine 87, aspartate 105, and alanine 134. Aspartate 157 contributes to the substrate binding site. Aspartate 157 contributes to the a divalent metal cation binding site. Aspartate 159 is a binding site for S-adenosyl-L-methionine. Aspartate 183 and asparagine 184 together coordinate a divalent metal cation. Residue asparagine 188 participates in substrate binding.

Belongs to the class I-like SAM-binding methyltransferase superfamily. Cation-dependent O-methyltransferase family. CCoAMT subfamily. In terms of assembly, homodimer. The cofactor is a divalent metal cation. Roots and leaves.

The enzyme catalyses (E)-caffeoyl-CoA + S-adenosyl-L-methionine = (E)-feruloyl-CoA + S-adenosyl-L-homocysteine + H(+). Its pathway is aromatic compound metabolism; phenylpropanoid biosynthesis. In terms of biological role, methylates caffeoyl-CoA to feruloyl-CoA and 5-hydroxyferuloyl-CoA to sinapoyl-CoA. Plays a role in the synthesis of feruloylated polysaccharides. Involved in the reinforcement of the plant cell wall. Also involved in the responding to wounding or pathogen challenge by the increased formation of cell wall-bound ferulic acid polymers. The sequence is that of Caffeoyl-CoA O-methyltransferase from Petroselinum crispum (Parsley).